We begin with the raw amino-acid sequence, 691 residues long: Proprotein convertase subtilisin/kexin type 9 (691 aa).

A signal peptide spans 1–29 (MGTVSSRRLWWPLPLLLLLLLLGPAGARA). Positions 30 to 151 (QEDDDGDYEE…IEEDSSVFAQ (122 aa)) are excised as a propeptide. Sulfotyrosine is present on tyrosine 37. Serine 46 is modified (phosphoserine). An Inhibitor I9 domain is found at 76-148 (TYVVVLKEET…VDYIEEDSSV (73 aa)). A Peptidase S8 domain is found at 154–460 (PWNLERITPA…GWQLFCRTVW (307 aa)). Active-site charge relay system residues include aspartate 185 and histidine 225. Intrachain disulfides connect cysteine 222–cysteine 254 and cysteine 322–cysteine 357. Residue serine 385 is the Charge relay system of the active site. Residues 449 to 691 (GAGWQLFCRT…HLAQASQELQ (243 aa)) form a C-terminal domain region. 3 disulfides stabilise this stretch: cysteine 456-cysteine 526, cysteine 476-cysteine 525, and cysteine 485-cysteine 508. Asparagine 532 carries N-linked (GlcNAc...) asparagine glycosylation. Cystine bridges form between cysteine 533-cysteine 600, cysteine 551-cysteine 599, cysteine 561-cysteine 587, cysteine 607-cysteine 678, cysteine 625-cysteine 677, and cysteine 634-cysteine 653. The residue at position 687 (serine 687) is a Phosphoserine.

This sequence belongs to the peptidase S8 family. In terms of assembly, monomer. Can self-associate to form dimers and higher multimers which may have increased LDLR degrading activity. The precursor protein but not the mature protein may form multimers. Interacts with APOB, VLDLR, LRP8/APOER2 and BACE1. The full-length immature form (pro-PCSK9) interacts with SCNN1A, SCNN1B and SCNN1G. The pro-PCSK9 form (via C-terminal domain) interacts with LDLR. Interacts (via the C-terminal domain) with ANXA2 (via repeat Annexin 1); the interaction inhibits the degradation of LDLR. Ca(2+) is required as a cofactor. Post-translationally, cleavage by furin and PCSK5 generates a truncated inactive protein that is unable to induce LDLR degradation. In terms of processing, undergoes autocatalytic cleavage in the endoplasmic reticulum to release the propeptide from the N-terminus and the cleavage of the propeptide is strictly required for its maturation and activation. The cleaved propeptide however remains associated with the catalytic domain through non-covalent interactions, preventing potential substrates from accessing its active site. As a result, it is secreted from cells as a propeptide-containing, enzymatically inactive protein. Phosphorylation protects the propeptide against proteolysis.

It is found in the cytoplasm. It localises to the secreted. The protein resides in the endosome. The protein localises to the lysosome. Its subcellular location is the cell surface. It is found in the endoplasmic reticulum. It localises to the golgi apparatus. With respect to regulation, its proteolytic activity is autoinhibited by the non-covalent binding of the propeptide to the catalytic domain. Inhibited by EGTA. Crucial player in the regulation of plasma cholesterol homeostasis. Binds to low-density lipid receptor family members: low density lipoprotein receptor (LDLR), very low density lipoprotein receptor (VLDLR), apolipoprotein E receptor (LRP1/APOER) and apolipoprotein receptor 2 (LRP8/APOER2), and promotes their degradation in intracellular acidic compartments. Acts via a non-proteolytic mechanism to enhance the degradation of the hepatic LDLR through a clathrin LDLRAP1/ARH-mediated pathway. May prevent the recycling of LDLR from endosomes to the cell surface or direct it to lysosomes for degradation. Can induce ubiquitination of LDLR leading to its subsequent degradation. Inhibits intracellular degradation of APOB via the autophagosome/lysosome pathway in a LDLR-independent manner. Involved in the disposal of non-acetylated intermediates of BACE1 in the early secretory pathway. Inhibits epithelial Na(+) channel (ENaC)-mediated Na(+) absorption by reducing ENaC surface expression primarily by increasing its proteasomal degradation. Regulates neuronal apoptosis via modulation of LRP8/APOER2 levels and related anti-apoptotic signaling pathways. This Saimiri boliviensis boliviensis (Bolivian squirrel monkey) protein is Proprotein convertase subtilisin/kexin type 9 (PCSK9).